The following is a 271-amino-acid chain: Autophagy-related protein 5 (271 aa).

Residue Lys145 forms a Glycyl lysine isopeptide (Lys-Gly) (interchain with G-Cter in ATG12) linkage.

Belongs to the ATG5 family. As to quaternary structure, conjugated with ATG12. Interacts with ATG10. The ATG5-ATG12 conjugate forms a complex with several units of ATG16. The ATG12-ATG5 conjugate also associates with ATG3. Conjugated to ATG12; which is essential for autophagy. Conjugation with ATG12 involves ATG7 as an E1-like activating enzyme and ATG10 as an E2-like conjugating enzyme.

Its subcellular location is the preautophagosomal structure membrane. Involved in cytoplasm to vacuole transport (Cvt) and autophagic vesicle formation. Autophagy is essential for maintenance of amino acid levels and protein synthesis under nitrogen starvation. Required for selective autophagic degradation of the nucleus (nucleophagy). Also required for mitophagy, which eliminates defective or superfluous mitochondria in order to fulfill cellular energy requirements and prevent excess ROS production. Conjugation with ATG12, through a ubiquitin-like conjugating system involving ATG7 as an E1-like activating enzyme and ATG10 as an E2-like conjugating enzyme, is essential for its function. The ATG12-ATG5 conjugate acts as an E3-like enzyme which is required for lipidation of ATG8 and ATG8 association to the vesicle membranes. ATG12-ATG5 rearranges the ATG3 catalytic center and enhances its E2 activity. The protein is Autophagy-related protein 5 of Kluyveromyces marxianus (strain DMKU3-1042 / BCC 29191 / NBRC 104275) (Yeast).